A 276-amino-acid polypeptide reads, in one-letter code: Undecaprenyl-diphosphatase (276 aa).

The next 7 membrane-spanning stretches (helical) occupy residues 48–68 (AANS…AIVF), 92–112 (LSIA…FLFE), 119–139 (LFSV…MLFA), 155–175 (ISYK…WPGF), 196–216 (ADFT…LSLV), 225–245 (DLMP…LFVV), and 255–275 (IKLV…LLIM).

This sequence belongs to the UppP family.

The protein localises to the cell membrane. The catalysed reaction is di-trans,octa-cis-undecaprenyl diphosphate + H2O = di-trans,octa-cis-undecaprenyl phosphate + phosphate + H(+). In terms of biological role, catalyzes the dephosphorylation of undecaprenyl diphosphate (UPP). Confers resistance to bacitracin. This chain is Undecaprenyl-diphosphatase, found in Bacillus subtilis (strain 168).